A 182-amino-acid chain; its full sequence is Alpha-S2-casein (182 aa).

The first 15 residues, 1-15 (MKFFIFTCLLAVALA), serve as a signal peptide directing secretion. A phosphoserine mark is found at serine 22, serine 23, and serine 24.

The protein belongs to the alpha-casein family. In terms of tissue distribution, mammary gland specific. Secreted in milk.

It localises to the secreted. Important role in the capacity of milk to transport calcium phosphate. The sequence is that of Alpha-S2-casein (CSN1S2) from Oryctolagus cuniculus (Rabbit).